The following is a 193-amino-acid chain: Probable GTP-binding protein EngB (193 aa).

Positions 22–193 (MYPEISFIGR…ELWQIIEDLL (172 aa)) constitute an EngB-type G domain. GTP-binding positions include 30–37 (GRSNVGKS), 57–61 (GKTRT), 75–78 (DLPG), 142–145 (TKMD), and 174–176 (FSS). Positions 37 and 59 each coordinate Mg(2+).

It belongs to the TRAFAC class TrmE-Era-EngA-EngB-Septin-like GTPase superfamily. EngB GTPase family. Mg(2+) is required as a cofactor.

Functionally, necessary for normal cell division and for the maintenance of normal septation. This is Probable GTP-binding protein EngB from Natranaerobius thermophilus (strain ATCC BAA-1301 / DSM 18059 / JW/NM-WN-LF).